The following is a 289-amino-acid chain: 4-diphosphocytidyl-2-C-methyl-D-erythritol kinase (289 aa).

Residue K11 is part of the active site. 95-105 (PMGGGIGGGSS) provides a ligand contact to ATP. D137 is a catalytic residue.

The protein belongs to the GHMP kinase family. IspE subfamily.

The catalysed reaction is 4-CDP-2-C-methyl-D-erythritol + ATP = 4-CDP-2-C-methyl-D-erythritol 2-phosphate + ADP + H(+). The protein operates within isoprenoid biosynthesis; isopentenyl diphosphate biosynthesis via DXP pathway; isopentenyl diphosphate from 1-deoxy-D-xylulose 5-phosphate: step 3/6. Functionally, catalyzes the phosphorylation of the position 2 hydroxy group of 4-diphosphocytidyl-2C-methyl-D-erythritol. The protein is 4-diphosphocytidyl-2-C-methyl-D-erythritol kinase of Aeromonas salmonicida (strain A449).